A 378-amino-acid chain; its full sequence is Polygalacturonase (378 aa).

Residues 1–20 (MILTRSVVLGFLGSASLALA) form the signal peptide. C39 and C57 are joined by a disulfide. PbH1 repeat units lie at residues 172–203 (SSGLTISGVTIDNKNGDTNSLGHNTDGFDIGD), 204–225 (SDSITITGATVYNQDDCLAINS), 226–246 (GTNIVFSGGYCSGGHGLSIGS), 255–276 (VETVHISSTQVVNSQNGVRVKA), and 284–306 (IKGVTFQDITLSGITSQGITIRQ). D218 serves as the catalytic Proton donor. A disulfide bond links C220 and C236. H240 is an active-site residue. 2 disulfide bridges follow: C346-C352 and C370-C378.

The protein belongs to the glycosyl hydrolase 28 family.

Its subcellular location is the secreted. It carries out the reaction (1,4-alpha-D-galacturonosyl)n+m + H2O = (1,4-alpha-D-galacturonosyl)n + (1,4-alpha-D-galacturonosyl)m.. The chain is Polygalacturonase (PEPG1) from Penicillium expansum (Blue mold rot fungus).